The sequence spans 292 residues: E3 ubiquitin-protein ligase RNF144A (292 aa).

Positions 16 to 236 (PLVSCKLCLG…YDKGPCRNKL (221 aa)) are TRIAD supradomain. Residues Cys20, Cys23, Cys43, Cys46, Cys111, Cys116, Cys135, Cys138, Cys143, Cys146, His151, Cys156, Cys185, and Cys188 each contribute to the Zn(2+) site. An RING-type 1 zinc finger spans residues 20–70 (CKLCLGEYPVEQMTTIAQCQCIFCTLCLKQYVELLIKEGLETAISCPDAAC). Residues 91-156 (QRYKKLQFER…KASWHPGQGC (66 aa)) form an IBR-type zinc finger. Residues 185–214 (CPKCKVYIERDEGCAQMMCKNCKHAFCWYC) form an RING-type 2; atypical zinc finger. The active site involves Cys198. The Zn(2+) site is built by Cys203, Cys206, Cys211, Cys214, His226, and Cys232. A helical transmembrane segment spans residues 250–270 (VVGIFAGFGLLLLVASPFLLL).

This sequence belongs to the RBR family. RNF144 subfamily. In terms of assembly, self-associates. Interacts with UBE2L3. In terms of processing, auto-ubiquitinated.

Its subcellular location is the cell membrane. The protein localises to the cytoplasmic vesicle membrane. The protein resides in the endosome membrane. It is found in the endoplasmic reticulum membrane. The enzyme catalyses [E2 ubiquitin-conjugating enzyme]-S-ubiquitinyl-L-cysteine + [acceptor protein]-L-lysine = [E2 ubiquitin-conjugating enzyme]-L-cysteine + [acceptor protein]-N(6)-ubiquitinyl-L-lysine.. Its pathway is protein modification; protein ubiquitination. Functionally, E3 ubiquitin-protein ligase which accepts ubiquitin from E2 ubiquitin-conjugating enzymes UBE2L3 and UBE2L6 in the form of a thioester and then directly transfers the ubiquitin to targeted substrates. Mediates the ubiquitination and degradation of the DNA damage kinase PRKDC during DNA damage. Positively regulates DNA virus or exogenous cytosolic DNA-triggered innate immune response by mediating STING1 ubiquitination and increasing its 'Lys-6'-linked ubiquitination and translocation from the endoplasmic reticulum to the Golgi leading to downstream signaling pathways. Plays a positive role in EGF-dependent cell proliferation by prolonging EGF/EGFR signaling during EGF stimulation through EGFR ubiquitination. Increases ERK activity independently of EGFR signaling by promoting polyubiquitination and subsequent degradation of VRK3 in the cytosol. In Homo sapiens (Human), this protein is E3 ubiquitin-protein ligase RNF144A (RNF144A).